Consider the following 246-residue polypeptide: Polyhedrin (246 aa).

This sequence belongs to the polyhedrin family.

Its function is as follows. Major component of the virus occlusion bodies, which are large proteinaceous structures (polyhedra), that protect the virus from the outside environment for extended periods until they are ingested by insect larvae. The chain is Polyhedrin (PH) from Mamestra brassicae nuclear polyhedrosis virus (MbNPV).